The following is a 313-amino-acid chain: Cytochrome f (313 aa).

An N-terminal signal peptide occupies residues 1-31; sequence MQNMFSFLSNKKIIALFLIIGTIFMPLSSEA. Heme contacts are provided by Tyr32, Cys52, Cys55, and His56. The chain crosses the membrane as a helical span at residues 279–298; sequence IKWLIAFLILSTLGQVFLVL.

Belongs to the cytochrome f family. As to quaternary structure, the 4 large subunits of the cytochrome b6-f complex are cytochrome b6, subunit IV (17 kDa polypeptide, petD), cytochrome f and the Rieske protein, while the 4 small subunits are PetG, PetL, PetM and PetN. The complex functions as a dimer. Requires heme as cofactor.

Its subcellular location is the plastid. The protein localises to the chloroplast thylakoid membrane. Component of the cytochrome b6-f complex, which mediates electron transfer between photosystem II (PSII) and photosystem I (PSI), cyclic electron flow around PSI, and state transitions. The protein is Cytochrome f (petA) of Mesostigma viride (Green alga).